The sequence spans 94 residues: Putative regulatory protein LEPBI_I0950 (94 aa).

This sequence belongs to the RemA family.

The sequence is that of Putative regulatory protein LEPBI_I0950 from Leptospira biflexa serovar Patoc (strain Patoc 1 / ATCC 23582 / Paris).